Reading from the N-terminus, the 398-residue chain is Thyrotropin-releasing hormone receptor (398 aa).

Over 1-28 (MENETVSELNQTQLQPRAVVALEYQVVT) the chain is Extracellular. Asparagine 3 and asparagine 10 each carry an N-linked (GlcNAc...) asparagine glycan. Residues 29 to 51 (ILLVLIICGLGIVGNIMVVLVVM) form a helical membrane-spanning segment. Residues 52 to 61 (RTKHMRTPTN) lie on the Cytoplasmic side of the membrane. The chain crosses the membrane as a helical span at residues 62-83 (CYLVSLAVADLMVLVAAGLPNI). The Extracellular segment spans residues 84–99 (TDSIYGSWVYGYVGCL). A disulfide bridge links cysteine 98 with cysteine 179. A helical membrane pass occupies residues 100 to 121 (CITYLQYLGINASSCSITAFTI). At 122 to 144 (ERYIAICHPIKAQFLCTFSRAKK) the chain is on the cytoplasmic side. A helical membrane pass occupies residues 145–168 (IIIFVWAFTSLYCMLWFFLLDLNI). The Extracellular portion of the chain corresponds to 169–193 (STYKDAIVISCGYKISRNYYSPIYL). The chain crosses the membrane as a helical span at residues 194–215 (MDFGVFYVVPMILATVLYGFIA). Topologically, residues 216-266 (RILFLNPIPSDPKENSKTWKNDSTHQNTNLNVNTSNRCFNSTVSSRKQVTK) are cytoplasmic. The chain crosses the membrane as a helical span at residues 267–288 (MLAVVVILFALLWMPYRTLVVV). Residues 289–296 (NSFLSSPF) are Extracellular-facing. Residues 297-319 (QENWFLLFCRICIYLNSAINPVI) traverse the membrane as a helical segment. Topologically, residues 320-398 (YNLMSQKFRA…LASEVSFSQS (79 aa)) are cytoplasmic.

The protein belongs to the G-protein coupled receptor 1 family.

Its subcellular location is the cell membrane. Its function is as follows. Receptor for thyrotropin-releasing hormone (TRH). Upon ligand binding, this G-protein-coupled receptor triggers activation of the phosphatidylinositol (IP3)-calcium-protein kinase C (PKC) pathway. This chain is Thyrotropin-releasing hormone receptor (TRHR), found in Homo sapiens (Human).